A 379-amino-acid polypeptide reads, in one-letter code: NAD-dependent protein deacetylase sirtuin-2 (379 aa).

Over residues 1 to 10 the composition is skewed to basic and acidic residues; that stretch reads MSEEVSKRVE. The tract at residues 1–32 is disordered; sequence MSEEVSKRVEEEADTPGLEGQSDDSSDEGDAS. A compositionally biased stretch (acidic residues) spans 21–32; that stretch reads QSDDSSDEGDAS. The Deacetylase sirtuin-type domain occupies 55–335; it reads KVLDELTLDS…MTLAELLGWK (281 aa). NAD(+)-binding positions include 83–87, 93–95, and 165–168; these read AGIST, DFR, and QNID. The Proton acceptor role is filled by His185. Zn(2+)-binding residues include Cys193, Cys198, Cys219, and Cys222. NAD(+) contacts are provided by residues 260-261, 284-286, and Cys321; these read TS and NME. The segment covering 349 to 361 has biased composition (basic and acidic residues); it reads IDSKDAKKTDKEA. The segment at 349–379 is disordered; it reads IDSKDAKKTDKEASQSSKSAVAEAEKTDKTE.

Belongs to the sirtuin family. Class I subfamily. The cofactor is Zn(2+).

The protein localises to the cytoplasm. It is found in the nucleus. It catalyses the reaction N(6)-acetyl-L-lysyl-[protein] + NAD(+) + H2O = 2''-O-acetyl-ADP-D-ribose + nicotinamide + L-lysyl-[protein]. The enzyme catalyses N(6)-tetradecanoyl-L-lysyl-[protein] + NAD(+) + H2O = 2''-O-tetradecanoyl-ADP-D-ribose + nicotinamide + L-lysyl-[protein]. It carries out the reaction N(6)-hexadecanoyl-L-lysyl-[protein] + NAD(+) + H2O = 2''-O-hexadecanoyl-ADP-D-ribose + nicotinamide + L-lysyl-[protein]. NAD-dependent protein deacetylase, which deacetylates internal lysines on histone and alpha-tubulin as well as many other proteins such as key transcription factors. Participates in the modulation of multiple and diverse biological processes such as cell cycle control, genomic integrity, microtubule dynamics, cell differentiation, metabolic networks, and autophagy. Plays a major role in the control of cell cycle progression and genomic stability. Deacetylates histone H4 at 'Lys-16' (H4K16ac) at the VEGFA promoter. Thereby contributes to regulate expression of vegfa, a key regulator of angiogenesis. In addition to protein deacetylase activity, also has activity toward long-chain fatty acyl groups and mediates protein-lysine demyristoylation and depalmitoylation of target proteins. This is NAD-dependent protein deacetylase sirtuin-2 (sirt2) from Danio rerio (Zebrafish).